We begin with the raw amino-acid sequence, 448 residues long: Omega-6 fatty acid desaturase, chloroplastic (448 aa).

The N-terminal 69 residues, 1-69 (MASRIADSLF…VKRRIGCIKA (69 aa)), are a transit peptide targeting the chloroplast. N-acetylvaline is present on Val70. A run of 2 helical transmembrane segments spans residues 124–144 (LKALKSVLISVTSYTLGLFMI) and 149–169 (WYLLPLAWAWTGTAITGFFVI). The Histidine box-1 signature appears at 171 to 175 (HDCAH). The Histidine box-2 motif lies at 207–211 (HDRHH). Transmembrane regions (helical) follow at residues 282-302 (VFAFMAVGWPLIVYKVGILGW) and 303-323 (VKFWLMPWLGYHFWMSTFTMV). Residues 367–371 (HIPHH) carry the Histidine box-3 motif.

The protein belongs to the fatty acid desaturase type 1 family.

It is found in the plastid. The protein localises to the chloroplast inner membrane. It carries out the reaction a (9Z)-octadecenoyl-containing glycerolipid + 2 reduced [2Fe-2S]-[ferredoxin] + O2 + 2 H(+) = a (9Z,12Z)-octadecadienoyl-containing glycerolipid + 2 oxidized [2Fe-2S]-[ferredoxin] + 2 H2O. Its pathway is lipid metabolism; polyunsaturated fatty acid biosynthesis. Its function is as follows. Chloroplast omega-6 fatty acid desaturase introduces the second double bond in the biosynthesis of 16:3 and 18:3 fatty acids, important constituents of plant membranes. It is thought to use ferredoxin as an electron donor and to act on fatty acids esterified to galactolipids, sulfolipids and phosphatidylglycerol. The chain is Omega-6 fatty acid desaturase, chloroplastic from Arabidopsis thaliana (Mouse-ear cress).